Here is a 76-residue protein sequence, read N- to C-terminus: cAMP-dependent protein kinase inhibitor alpha (76 aa).

Thr-2 carries the post-translational modification N-acetylthreonine. Residues 49–76 (KTEGEEDAQRSSTEQSGEAQGEAAKSES) are disordered.

Belongs to the PKI family.

Extremely potent competitive inhibitor of cAMP-dependent protein kinase activity, this protein interacts with the catalytic subunit of the enzyme after the cAMP-induced dissociation of its regulatory chains. The chain is cAMP-dependent protein kinase inhibitor alpha (PKIA) from Homo sapiens (Human).